We begin with the raw amino-acid sequence, 132 residues long: Small ribosomal subunit protein uS8 (132 aa).

It belongs to the universal ribosomal protein uS8 family. As to quaternary structure, part of the 30S ribosomal subunit. Contacts proteins S5 and S12.

Functionally, one of the primary rRNA binding proteins, it binds directly to 16S rRNA central domain where it helps coordinate assembly of the platform of the 30S subunit. The sequence is that of Small ribosomal subunit protein uS8 from Brucella anthropi (strain ATCC 49188 / DSM 6882 / CCUG 24695 / JCM 21032 / LMG 3331 / NBRC 15819 / NCTC 12168 / Alc 37) (Ochrobactrum anthropi).